The primary structure comprises 988 residues: RecQ-like DNA helicase blm-1 (988 aa).

The interval 46 to 119 (CEEREEEYID…QFPSRPQKRL (74 aa)) is disordered. 2 consecutive repeat copies span residues 121–129 (DPPIVDLDE) and 130–138 (EPPIVDLDD). The interval 121-138 (DPPIVDLDEEPPIVDLDD) is 2 X 9 AA tandem repeats of [DE]-P-P-I-V-D-L-D-[ED]. The interval 148-185 (TSEEVVSGDIAPEEEEEEGHDSFDDFESVPAQPPSKNT) is disordered. A compositionally biased stretch (acidic residues) spans 158 to 174 (APEEEEEEGHDSFDDFE). Residues 248–252 (FRHRQ) and 272–276 (GAGKS) contribute to the ATP site. Positions 256 to 433 (ILSTLMGHDT…RDHLKMQNSK (178 aa)) constitute a Helicase ATP-binding domain. The short motif at 375 to 378 (DEAH) is the DEAH box element. Residues 458 to 603 (NVVEKMKQLY…VRSMHLNNVL (146 aa)) enclose the Helicase C-terminal domain. A 3' overhang DNA-binding region spans residues 478-480 (SRK). An ATP-binding site is contributed by Arg-562. The interval 580-583 (RLRR) is 3' overhang DNA-binding. Zn(2+)-binding residues include Cys-615, Cys-633, Cys-640, and Cys-643. 3 3' overhang DNA-binding regions span residues 676 to 678 (TLK), 687 to 691 (ALIKK), and 736 to 742 (YSVPNQA). Positions 807-888 (GDVFTRCLQD…ATYWKQVDER (82 aa)) constitute an HRDC domain. Residues 930–988 (GGGGCRGRGKKRAFSGFSSGRATKKPRATAPSARGKTSGRGGAKPATSLKRNMYPATSM) are disordered. Residues 939–955 (KKRAFSGFSSGRATKKP) carry the Nuclear localization signal motif.

This sequence belongs to the helicase family. RecQ subfamily. Monomer. Homodimer (via N-terminus). Homotetramer (via N-terminus); dimer of dimers. Homohexamer (via N-terminus). Self-association negatively regulates DNA unwinding amplitude and rate. Oligomer forms dissociate into monomer in presence of ATP. Component of the BTR double Holliday Junction dissolution complex composed of at least him-6, top-3, rmh-1 and rmif-2, which is involved in double strand break repair in the germline. May interact with rmh-1; the interaction is required for mutual stability and localization at nuclear foci. Forms a complex composed of cdc-48.1, him-6 and crp-1; within the complex, interacts with cdc-48.1. It depends on Zn(2+) as a cofactor.

The protein resides in the nucleus. It localises to the chromosome. It catalyses the reaction Couples ATP hydrolysis with the unwinding of duplex DNA by translocating in the 3'-5' direction.. The catalysed reaction is ATP + H2O = ADP + phosphate + H(+). Functionally, component of the BTR double Holliday Junction dissolution complex, which is involved in homologous recombination during meiotic double strand break in the germline. Stabilizes and positively regulates the localization of the BTR double Holliday Junction dissolution complex component rmh-1 at nuclear foci during meiotic recombination. Participates in DNA replication and repair. Exhibits a magnesium-dependent ATP-dependent DNA-helicase activity that unwinds single- and double-stranded DNA in a 3'-5' direction. Negatively regulates sister chromatid exchange (SCE). ATP-dependent DNA helicase that unwinds single- and double-stranded DNA in a 3'-5' direction. Participates in DNA replication and repair. Negatively regulates sister chromatid exchange (SCE). Stimulates DNA 4-way junction branch migration and DNA Holliday junction dissolution. Binds single-stranded DNA (ssDNA), forked duplex DNA and DNA Holliday junction. This Caenorhabditis elegans protein is RecQ-like DNA helicase blm-1.